The following is an 867-amino-acid chain: Replication origin-binding protein (867 aa).

Positions 1 to 39 are disordered; it reads MNVATCTHQTHHAARAPGATSAPGAASGDPLGARRPIGD. Low complexity predominate over residues 15 to 28; that stretch reads RAPGATSAPGAASG. The Helicase ATP-binding domain maps to 86 to 251; it reads ASAPTARCVT…CSLRGEKNVH (166 aa). 99 to 106 contributes to the ATP binding site; that stretch reads APMGSGKT.

This sequence belongs to the herpesviridae OriBP family. In terms of assembly, homodimer. Interacts with the major DNA-binding protein ICP8. Interacts with the helicase/primase component UL8 and the polymerase accessory protein UL42.

The protein localises to the host nucleus. Functionally, functions as a docking protein to recruit essential components of the viral replication machinery to viral DNA origins. In the presence of the major DNA-binding protein, opens dsDNA leading to a conformational change in the origin that facilitates DNA unwinding and subsequent replication. The chain is Replication origin-binding protein from Human herpesvirus 2 (strain HG52) (HHV-2).